The primary structure comprises 234 residues: Carboxy-S-adenosyl-L-methionine synthase (234 aa).

Residues Tyr35, 60–62, 83–84, and Arg191 each bind S-adenosyl-L-methionine; these read GCS and DN.

The protein belongs to the class I-like SAM-binding methyltransferase superfamily. Cx-SAM synthase family. In terms of assembly, homodimer.

The enzyme catalyses prephenate + S-adenosyl-L-methionine = carboxy-S-adenosyl-L-methionine + 3-phenylpyruvate + H2O. Functionally, catalyzes the conversion of S-adenosyl-L-methionine (SAM) to carboxy-S-adenosyl-L-methionine (Cx-SAM). In Campylobacter lari (strain RM2100 / D67 / ATCC BAA-1060), this protein is Carboxy-S-adenosyl-L-methionine synthase.